Reading from the N-terminus, the 336-residue chain is Dihydroorotate dehydrogenase (quinone) (336 aa).

Residues 62-66 (AGLDK) and T86 contribute to the FMN site. K66 is a substrate binding site. 111–115 (NRMGF) serves as a coordination point for substrate. FMN contacts are provided by N139 and N172. Residue N172 coordinates substrate. S175 acts as the Nucleophile in catalysis. N177 provides a ligand contact to substrate. FMN is bound by residues K217 and T245. Residue 246–247 (NT) participates in substrate binding. FMN-binding positions include G268, G297, and 318-319 (YS).

The protein belongs to the dihydroorotate dehydrogenase family. Type 2 subfamily. In terms of assembly, monomer. FMN serves as cofactor.

Its subcellular location is the cell membrane. The catalysed reaction is (S)-dihydroorotate + a quinone = orotate + a quinol. The protein operates within pyrimidine metabolism; UMP biosynthesis via de novo pathway; orotate from (S)-dihydroorotate (quinone route): step 1/1. In terms of biological role, catalyzes the conversion of dihydroorotate to orotate with quinone as electron acceptor. This is Dihydroorotate dehydrogenase (quinone) from Escherichia coli (strain SE11).